A 604-amino-acid polypeptide reads, in one-letter code: Elongation factor 4 (604 aa).

The region spanning 7–189 (SRLRNFCIIA…AVVDRIPPPA (183 aa)) is the tr-type G domain. GTP is bound by residues 19–24 (DHGKST) and 136–139 (NKID).

This sequence belongs to the TRAFAC class translation factor GTPase superfamily. Classic translation factor GTPase family. LepA subfamily.

Its subcellular location is the cell inner membrane. It catalyses the reaction GTP + H2O = GDP + phosphate + H(+). Its function is as follows. Required for accurate and efficient protein synthesis under certain stress conditions. May act as a fidelity factor of the translation reaction, by catalyzing a one-codon backward translocation of tRNAs on improperly translocated ribosomes. Back-translocation proceeds from a post-translocation (POST) complex to a pre-translocation (PRE) complex, thus giving elongation factor G a second chance to translocate the tRNAs correctly. Binds to ribosomes in a GTP-dependent manner. This chain is Elongation factor 4, found in Prochlorococcus marinus (strain MIT 9313).